Here is a 676-residue protein sequence, read N- to C-terminus: uncharacterized protein (676 aa).

This is an uncharacterized protein from Magallana gigas (Pacific oyster).